Reading from the N-terminus, the 309-residue chain is 1,2-phenylacetyl-CoA epoxidase, subunit A (309 aa).

Residues R33, Q37, 103–106, N132, M193, 202–204, K214, and N218 contribute to the substrate site; these read KYSS and SPN.

Forms a stable heterotetramer (dimer of heterodimers) with PaaC. Requires Fe cation as cofactor.

The catalysed reaction is phenylacetyl-CoA + NADPH + O2 + H(+) = 2-(1,2-epoxy-1,2-dihydrophenyl)acetyl-CoA + NADP(+) + H2O. It participates in aromatic compound metabolism; phenylacetate degradation. Its function is as follows. Component of 1,2-phenylacetyl-CoA epoxidase multicomponent enzyme system which catalyzes the reduction of phenylacetyl-CoA (PA-CoA) to form 1,2-epoxyphenylacetyl-CoA. The subunit A is the catalytic subunit involved in the incorporation of one atom of molecular oxygen into phenylacetyl-CoA. The protein is 1,2-phenylacetyl-CoA epoxidase, subunit A (paaA) of Escherichia coli (strain K12).